The sequence spans 211 residues: Imidazole glycerol phosphate synthase subunit HisH (211 aa).

The region spanning 1–206 (MIGIIDYGRG…GKWVNEDATV (206 aa)) is the Glutamine amidotransferase type-1 domain. Residue Cys-79 is the Nucleophile of the active site. Active-site residues include His-181 and Glu-183.

As to quaternary structure, heterodimer of HisH and HisF.

Its subcellular location is the cytoplasm. It carries out the reaction 5-[(5-phospho-1-deoxy-D-ribulos-1-ylimino)methylamino]-1-(5-phospho-beta-D-ribosyl)imidazole-4-carboxamide + L-glutamine = D-erythro-1-(imidazol-4-yl)glycerol 3-phosphate + 5-amino-1-(5-phospho-beta-D-ribosyl)imidazole-4-carboxamide + L-glutamate + H(+). The enzyme catalyses L-glutamine + H2O = L-glutamate + NH4(+). The protein operates within amino-acid biosynthesis; L-histidine biosynthesis; L-histidine from 5-phospho-alpha-D-ribose 1-diphosphate: step 5/9. Its function is as follows. IGPS catalyzes the conversion of PRFAR and glutamine to IGP, AICAR and glutamate. The HisH subunit catalyzes the hydrolysis of glutamine to glutamate and ammonia as part of the synthesis of IGP and AICAR. The resulting ammonia molecule is channeled to the active site of HisF. This is Imidazole glycerol phosphate synthase subunit HisH from Desulfitobacterium hafniense (strain Y51).